The primary structure comprises 421 residues: Zinc metalloproteinase-disintegrin-like lachestatin-1 (421 aa).

In terms of domain architecture, Peptidase M12B spans 10–206 (KYVKLVLVAD…DMPQCILEKP (197 aa)). 3 disulfides stabilise this stretch: Cys-121–Cys-201, Cys-161–Cys-185, and Cys-163–Cys-168. His-146 provides a ligand contact to Zn(2+). Residue Glu-147 is part of the active site. The Zn(2+) site is built by His-150 and His-156. The region spanning 214 to 299 (PPVCGNYFVE…AECTDRFQRN (86 aa)) is the Disintegrin domain. Val-216, Asn-219, Phe-221, Glu-223, Glu-226, and Asp-229 together coordinate Ca(2+). Disulfide bonds link Cys-217–Cys-246, Cys-228–Cys-241, Cys-230–Cys-236, Cys-240–Cys-263, Cys-254–Cys-260, Cys-259–Cys-285, Cys-272–Cys-292, Cys-279–Cys-310, Cys-303–Cys-315, Cys-322–Cys-372, Cys-337–Cys-383, Cys-350–Cys-360, Cys-367–Cys-409, and Cys-403–Cys-414. A D/ECD-tripeptide motif is present at residues 278–280 (ECD). Ca(2+)-binding residues include Asp-280, Met-281, Asp-283, Asp-294, and Arg-295. Asn-312 carries N-linked (GlcNAc...) asparagine glycosylation.

This sequence belongs to the venom metalloproteinase (M12B) family. P-III subfamily. P-IIIc sub-subfamily. In terms of assembly, homodimer; disulfide-linked. The cofactor is Zn(2+). Expressed by the venom gland.

It localises to the secreted. Its function is as follows. Snake venom zinc metalloprotease that induces apoptosis in vascular endothelial cells (VEC), without degrading the extracellular matrix (it cannot cleave collagen) or inhibiting adhesion of VEC. Has also fibrinogenolytic and hemorrhagic activities. This is Zinc metalloproteinase-disintegrin-like lachestatin-1 from Lachesis muta rhombeata (Bushmaster).